We begin with the raw amino-acid sequence, 317 residues long: MEELNTIKLSDHLTPFLTFNRQQWAELRKSVPLKLTEQDLKPLLGFNEELSLEEVSTIYLPLARLINYYIEENLRRQTVLKRFLSGHNPKVPYIISIAGSVSVGKSTSARILQSLLANWPVARKVDLITTDGFLYPLEILQKKNLLQKKGFPISYDTQRLIRFLADIKSGKKNVKAPIYSHLTYDIIPNQFDIVDRPDILILEGLNVLQIGTNKSNQMFVSDFVDFSIFVDAEEDQLKEWYIKRFLKFCRSAFTDPNSYFKHYANLSEQEAIETASQIWDNINGLNLKQNILPTRERANLILKKGENHKVELVKLRK.

Residue 99–106 coordinates ATP; it reads GSVSVGKS.

Belongs to the prokaryotic pantothenate kinase family.

The protein resides in the cytoplasm. The catalysed reaction is (R)-pantothenate + ATP = (R)-4'-phosphopantothenate + ADP + H(+). The protein operates within cofactor biosynthesis; coenzyme A biosynthesis; CoA from (R)-pantothenate: step 1/5. The sequence is that of Pantothenate kinase from Histophilus somni (strain 129Pt) (Haemophilus somnus).